The sequence spans 144 residues: Large ribosomal subunit protein uL16 (144 aa).

Basic residues predominate over residues 1–19 (MLLPKRVKYRRQHRPKTTG). Positions 1–26 (MLLPKRVKYRRQHRPKTTGRSKGGNE) are disordered.

The protein belongs to the universal ribosomal protein uL16 family. Part of the 50S ribosomal subunit.

Its function is as follows. Binds 23S rRNA and is also seen to make contacts with the A and possibly P site tRNAs. The polypeptide is Large ribosomal subunit protein uL16 (Macrococcus caseolyticus (strain JCSC5402) (Macrococcoides caseolyticum)).